Consider the following 167-residue polypeptide: Centrin-3 (167 aa).

EF-hand domains are found at residues 25–60 (EQKQ…LGFD), 61–96 (VKKA…WILE), 98–133 (DPHE…LGEN), and 134–167 (MSDE…TGDI). Phosphoserine is present on Ser-135. Ca(2+) contacts are provided by Asp-147, Asp-149, Asp-151, Glu-153, and Glu-158.

The protein belongs to the centrin family. In terms of assembly, monomer. Component of the nuclear pore complex (NPC)-associated TREX-2 complex (transcription and export complex 2), composed of at least GANP, 2 copies of ENY2, PCID2, SEM1/DSS1, and either centrin CETN2 or centrin CETN3. The TREX-2 complex also associates with ALYREF/ALY and with the nucleoporin NUP153. Interacts with USP49.

It is found in the cytoplasm. It localises to the cytoskeleton. The protein localises to the microtubule organizing center. The protein resides in the centrosome. Its subcellular location is the nucleus. It is found in the nucleolus. It localises to the nucleus envelope. The protein localises to the nuclear pore complex. The protein resides in the centriole. In terms of biological role, plays a fundamental role in microtubule-organizing center structure and function. As a component of the TREX-2 complex, involved in the export of mRNAs to the cytoplasm through the nuclear pores. This is Centrin-3 (CETN3) from Homo sapiens (Human).